We begin with the raw amino-acid sequence, 100 residues long: Urease subunit gamma (100 aa).

The protein belongs to the urease gamma subunit family. In terms of assembly, heterotrimer of UreA (gamma), UreB (beta) and UreC (alpha) subunits. Three heterotrimers associate to form the active enzyme.

The protein localises to the cytoplasm. The catalysed reaction is urea + 2 H2O + H(+) = hydrogencarbonate + 2 NH4(+). The protein operates within nitrogen metabolism; urea degradation; CO(2) and NH(3) from urea (urease route): step 1/1. In Lachnoclostridium phytofermentans (strain ATCC 700394 / DSM 18823 / ISDg) (Clostridium phytofermentans), this protein is Urease subunit gamma.